We begin with the raw amino-acid sequence, 375 residues long: 23S rRNA (uracil(747)-C(5))-methyltransferase RlmC (375 aa).

Cys-3, Cys-11, Cys-14, and Cys-87 together coordinate [4Fe-4S] cluster. Positions 212, 241, 262, and 307 each coordinate S-adenosyl-L-methionine. The active-site Nucleophile is the Cys-334.

The protein belongs to the class I-like SAM-binding methyltransferase superfamily. RNA M5U methyltransferase family. RlmC subfamily.

The catalysed reaction is uridine(747) in 23S rRNA + S-adenosyl-L-methionine = 5-methyluridine(747) in 23S rRNA + S-adenosyl-L-homocysteine + H(+). Its function is as follows. Catalyzes the formation of 5-methyl-uridine at position 747 (m5U747) in 23S rRNA. The polypeptide is 23S rRNA (uracil(747)-C(5))-methyltransferase RlmC (Salmonella typhi).